The sequence spans 1795 residues: Type III effector AvrE (1795 aa).

Residues 1–18 (MQSPSIHRNTGSIIQPTV) are compositionally biased toward polar residues. The disordered stretch occupies residues 1–227 (MQSPSIHRNT…PPREPMLWRS (227 aa)). Residues 60–75 (KSKAPQQKAATPPTAK) are compositionally biased toward low complexity. Composition is skewed to polar residues over residues 97 to 109 (GFSN…THSA) and 117 to 127 (HPNQASSSGAQ). Basic and acidic residues predominate over residues 129-154 (HEIHPEAAPRKNLRVRFDLPQDRLER). Polar residues predominate over residues 174–191 (ATRQFRSPDSHLQGSDGT). Over residues 203–215 (PSSSGSKIGDSDG) the composition is skewed to low complexity. 2 consecutive short sequence motifs (wxxxE) follow at residues 393-397 (WKIPE) and 829-833 (WQRFE). The segment at 1461–1488 (QIGGSHTAPTGTPASAPGPTPASQTAAN) is disordered. A compositionally biased stretch (low complexity) spans 1467 to 1487 (TAPTGTPASAPGPTPASQTAA). The short motif at 1787–1790 (KKEG) is the ERMRS element.

This sequence belongs to the AvrE family. As to quaternary structure, in planta interaction assays, interacts with the A.thaliana protein phosphatase 2A (PP2A) via direct interaction/association with specific B' regulatory subunits.

Its subcellular location is the secreted. It localises to the host cell. The protein localises to the host cell membrane. Its activity is regulated as follows. Polyamidoamine dendrimers inhibit channel and virulence activities. Its function is as follows. Major virulence factor that may function as a water- and solute-permeable channel dedicated to creating osmotic/water potential perturbation and a water- and nutrient-rich apoplast in which bacteria multiply within the infected plant tissues. Expression in Xenopus oocytes results in inward and outward currents, permeability to water and osmolarity-dependent oocyte swelling and bursting. In terms of biological role, elicits cell death in host tomato leaves and in non-host Nicotiana tabacum leaves. Acts within plant cells and promotes lesion formation. The combined action of AvrE and HopM1 is particularly important in promoting bacterial growth in plants. Contributes to the down-regulation of a specific subset of A.thaliana genes during infection, including NHL13, which is required for antibacterial immunity. The sequence is that of Type III effector AvrE from Pseudomonas syringae pv. tomato (strain ATCC BAA-871 / DC3000).